We begin with the raw amino-acid sequence, 388 residues long: Calcium-binding and spermatid-specific protein 1 (388 aa).

A disordered region spans residues 1–20 (MAEDGLPKIYSHPPAESTKT). T280 is modified (phosphothreonine; by CK2). 2 positions are modified to phosphoserine: S312 and S344.

It localises to the cytoplasm. The protein localises to the mitochondrion inner membrane. The protein resides in the cell projection. It is found in the cilium. Its subcellular location is the flagellum. It localises to the cytoplasmic vesicle. The protein localises to the secretory vesicle. The protein resides in the acrosome. In terms of biological role, calcium-binding protein. Essential for maintaining the structural integrity of the sperm flagella. This is Calcium-binding and spermatid-specific protein 1 (CABS1) from Bos taurus (Bovine).